The primary structure comprises 54 residues: uncharacterized protein (54 aa).

Residues 23-35 (DVMQEGETAKELN) show a composition bias toward basic and acidic residues. Residues 23–54 (DVMQEGETAKELNYEGEDMQATSSAQNRQTSV) are disordered. Polar residues predominate over residues 42 to 54 (QATSSAQNRQTSV).

This is an uncharacterized protein from Bacillus subtilis (strain 168).